A 418-amino-acid polypeptide reads, in one-letter code: Endoglucanase EG-II (418 aa).

The N-terminal stretch at 1–21 is a signal peptide; sequence MNKSVAPLLLAASILYGGAAA. Gln-22 carries the pyrrolidone carboxylic acid modification. Positions 22–57 constitute a CBM1 domain; sequence QQTVWGQCGGIGWSGPTNCAPGSACSTLNPYYAQCI. Residues 58–91 form a linker region; that stretch reads PGATTITTSTRPPSGPTTTTRATSTSSSTPPTSS. A disordered region spans residues 63-91; that stretch reads ITTSTRPPSGPTTTTRATSTSSSTPPTSS. Residues 92–418 are catalytic; the sequence is GVRFAGVNIA…SLVSSCLARK (327 aa). A disulfide bridge connects residues Cys-107 and Cys-113. Residue Asn-124 is glycosylated (N-linked (GlcNAc) asparagine). A disulfide bridge connects residues Cys-183 and Cys-190. The active-site Proton donor/acceptor is Glu-239. Cystine bridges form between Cys-323–Cys-359 and Cys-364–Cys-414. The Nucleophile role is filled by Glu-350.

Belongs to the glycosyl hydrolase 5 (cellulase A) family.

It is found in the secreted. It catalyses the reaction Endohydrolysis of (1-&gt;4)-beta-D-glucosidic linkages in cellulose, lichenin and cereal beta-D-glucans.. Its function is as follows. Endoglucanase (EG) that cleaves the internal beta-1,4-glucosidic bonds in cellulose. The degradation of cellulose involves an interplay between different cellulolytic enzymes. Hydrolysis starts with EGs, which cut internal glycosidic linkages to reduce the polymerization degree of the substrate and creates new chain ends for exocellobiohydrolases (CBHs). The CBH release the disaccharide cellobiose from the non-reducing end of the cellulose polymer chain. Finally, beta-1,4-glucosidases hydrolyze the cellobiose and other short cello-oligosaccharides into glucose units. This is Endoglucanase EG-II (egl2) from Hypocrea jecorina (strain ATCC 56765 / BCRC 32924 / NRRL 11460 / Rut C-30) (Trichoderma reesei).